Here is a 441-residue protein sequence, read N- to C-terminus: UDP-N-acetylglucosamine--N-acetylmuramyl-(pentapeptide) pyrophosphoryl-undecaprenol N-acetylglucosamine transferase (441 aa).

UDP-N-acetyl-alpha-D-glucosamine-binding positions include 28 to 30 (TGG), asparagine 140, arginine 176, serine 204, isoleucine 257, and glutamine 302.

It belongs to the glycosyltransferase 28 family. MurG subfamily.

The protein resides in the cell inner membrane. It carries out the reaction di-trans,octa-cis-undecaprenyl diphospho-N-acetyl-alpha-D-muramoyl-L-alanyl-D-glutamyl-meso-2,6-diaminopimeloyl-D-alanyl-D-alanine + UDP-N-acetyl-alpha-D-glucosamine = di-trans,octa-cis-undecaprenyl diphospho-[N-acetyl-alpha-D-glucosaminyl-(1-&gt;4)]-N-acetyl-alpha-D-muramoyl-L-alanyl-D-glutamyl-meso-2,6-diaminopimeloyl-D-alanyl-D-alanine + UDP + H(+). It functions in the pathway cell wall biogenesis; peptidoglycan biosynthesis. Cell wall formation. Catalyzes the transfer of a GlcNAc subunit on undecaprenyl-pyrophosphoryl-MurNAc-pentapeptide (lipid intermediate I) to form undecaprenyl-pyrophosphoryl-MurNAc-(pentapeptide)GlcNAc (lipid intermediate II). The protein is UDP-N-acetylglucosamine--N-acetylmuramyl-(pentapeptide) pyrophosphoryl-undecaprenol N-acetylglucosamine transferase of Xanthomonas oryzae pv. oryzae (strain KACC10331 / KXO85).